The chain runs to 461 residues: Protein eva-1 (461 aa).

The N-terminal stretch at 1–22 is a signal peptide; the sequence is MNMHIVSPVLLLFWFGIIVTDG. One can recognise an SUEL-type lectin domain in the interval 55 to 160; that stretch reads ACDGERITLS…KYLQMAYGCI (106 aa). The helical transmembrane segment at 370–390 threads the bilayer; the sequence is VMCIVLAVSMAAIVVLSACII. The disordered stretch occupies residues 397–429; it reads NKDSSRSSRRSRSRRSLETSKLVSSNYGGSITP. Residues 415 to 429 are compositionally biased toward polar residues; that stretch reads TSKLVSSNYGGSITP.

It belongs to the EVA1 family. Interacts with sax-3. Interacts with slt-1. Interacts (via the SUEL-type lectin domain) with madd-4. Interacts (via the transmembrane domain) with unc-40.

It is found in the cell membrane. Acts as a receptor for slt-1. Required for the guidance of the AVM pioneer axon to the ventral nerve cord. Acts as a unc-40 coreceptor to enhance the sensitivity of unc-40 to the madd-4 midline guidance cue to guide muscle arm extensions (muscle arms) and AVM mechanosensory axons towards the dorsoventral midline. The polypeptide is Protein eva-1 (eva-1) (Caenorhabditis elegans).